Reading from the N-terminus, the 499-residue chain is uncharacterized protein (499 aa).

The segment at 10–57 adopts an RING-type; degenerate zinc-finger fold; that stretch reads CGICGQEYSEDEKLLIPRILTECGHTICTGCAGKIKGQSSIIACPFDR. Residues 101-147 form a B box-type; degenerate zinc finger; it reads NKNGVCDENTNHHASNYCETCDADLCEECWTWIHSISTLAHHEKKMI.

This is an uncharacterized protein from Caenorhabditis elegans.